The primary structure comprises 142 residues: Ribosome-binding factor A (142 aa).

The disordered stretch occupies residues 119–142; that stretch reads EAKQKQHGVETDAEQGETKDEGDK.

It belongs to the RbfA family. In terms of assembly, monomer. Binds 30S ribosomal subunits, but not 50S ribosomal subunits or 70S ribosomes.

The protein resides in the cytoplasm. In terms of biological role, one of several proteins that assist in the late maturation steps of the functional core of the 30S ribosomal subunit. Associates with free 30S ribosomal subunits (but not with 30S subunits that are part of 70S ribosomes or polysomes). Required for efficient processing of 16S rRNA. May interact with the 5'-terminal helix region of 16S rRNA. In Shewanella halifaxensis (strain HAW-EB4), this protein is Ribosome-binding factor A.